Here is a 536-residue protein sequence, read N- to C-terminus: MFS-type efflux pump MFS1 (536 aa).

Helical transmembrane passes span 30–50 (VTGL…LLVA), 80–100 (YLLT…FFPV), and 102–122 (WVFL…GAAP). Asn-123 carries an N-linked (GlcNAc...) asparagine glycan. The next 3 membrane-spanning stretches (helical) occupy residues 133–153 (VAGI…AYSI), 163–183 (GAIG…GGAF), and 191–211 (WCFY…LIFL). N-linked (GlcNAc...) asparagine glycosylation occurs at Asn-221. The next 8 helical transmembrane spans lie at 234 to 254 (IGTA…QWGG), 264 to 284 (IIAL…FQIR), 306 to 326 (FFLF…PIWF), 342 to 362 (IPMV…VTAI), 366 to 386 (APLY…LTTF), 400 to 420 (IIFG…AQAV), 426 to 446 (VAVG…LFVS), and 503 to 523 (TWYV…GMEW).

The protein belongs to the major facilitator superfamily. TCR/Tet family.

The protein resides in the cell membrane. Its function is as follows. MFS-type efflux pump involved in the modulation susceptibility to azoles, including fluconazole, itraconazole, ketoconazole, miconazole and voriconazole. Confers also increased resistance chloramphenicol and thiamphenicol, suggesting that it acts as a pleiotropic drug transporter with a broad substrate spectrum. Finally, increases the tolerance to cycloheximide when expressed in S.cerevisiae, but not in dermatophyte species. The sequence is that of MFS-type efflux pump MFS1 from Trichophyton rubrum (strain ATCC MYA-4607 / CBS 118892) (Athlete's foot fungus).